The chain runs to 199 residues: Ribonuclease HII (199 aa).

Positions 14–199 (GLLAGVDEAG…SFAPVAEVLR (186 aa)) constitute an RNase H type-2 domain. A divalent metal cation contacts are provided by D20, E21, and D112.

This sequence belongs to the RNase HII family. Mn(2+) is required as a cofactor. It depends on Mg(2+) as a cofactor.

The protein localises to the cytoplasm. The enzyme catalyses Endonucleolytic cleavage to 5'-phosphomonoester.. Endonuclease that specifically degrades the RNA of RNA-DNA hybrids. The polypeptide is Ribonuclease HII (Polaromonas sp. (strain JS666 / ATCC BAA-500)).